Reading from the N-terminus, the 415-residue chain is Gamma-glutamyl phosphate reductase (415 aa).

The protein belongs to the gamma-glutamyl phosphate reductase family.

Its subcellular location is the cytoplasm. It catalyses the reaction L-glutamate 5-semialdehyde + phosphate + NADP(+) = L-glutamyl 5-phosphate + NADPH + H(+). It functions in the pathway amino-acid biosynthesis; L-proline biosynthesis; L-glutamate 5-semialdehyde from L-glutamate: step 2/2. Functionally, catalyzes the NADPH-dependent reduction of L-glutamate 5-phosphate into L-glutamate 5-semialdehyde and phosphate. The product spontaneously undergoes cyclization to form 1-pyrroline-5-carboxylate. The polypeptide is Gamma-glutamyl phosphate reductase (Clostridium perfringens (strain ATCC 13124 / DSM 756 / JCM 1290 / NCIMB 6125 / NCTC 8237 / Type A)).